A 242-amino-acid chain; its full sequence is Coiled-coil domain-containing protein 107 (242 aa).

Positions 1 to 24 (MEGAGPVLSILGLLLVSAPFGVLG) are cleaved as a signal peptide. A disordered region spans residues 27-62 (PSADLGAHPERGSQVSPGTTEPRRQPPPKDQRERAR). Basic and acidic residues predominate over residues 47–62 (EPRRQPPPKDQRERAR). A helical transmembrane segment spans residues 65–85 (SLSLGALYTAAVVAFVLFKCL). The stretch at 97–132 (EKNKKKSSQSEQQLVQLTQQLAQTEQHLNHLMTQLD) forms a coiled coil. The interval 186–210 (KEDQEAGNSQAWEEPITWSPETRNL) is disordered.

It localises to the membrane. The sequence is that of Coiled-coil domain-containing protein 107 (Ccdc107) from Mus musculus (Mouse).